Here is an 864-residue protein sequence, read N- to C-terminus: DNA mismatch repair protein MutS (864 aa).

Residue 613–620 participates in ATP binding; it reads GPNMGGKS.

It belongs to the DNA mismatch repair MutS family.

Functionally, this protein is involved in the repair of mismatches in DNA. It is possible that it carries out the mismatch recognition step. This protein has a weak ATPase activity. This is DNA mismatch repair protein MutS from Actinobacillus pleuropneumoniae serotype 3 (strain JL03).